The chain runs to 764 residues: MTIIHNLGFPRIGAQRELKRAVEAYWAGRQTAEALHETGRALRAAHWQRQADAGVAFVPVGDFAWYDHILEWTTLLGAVPARFGHPEGKPVDLDTLFRMGRGRAPSGKPAAACEMTKWFDTNYHYIVPELTPGQTFRVAREDLFEQVKEAQALGHRVKPVIPGPLTWLWLGKGDAFAQGAGDIGKLQLLDALLPVYGEVLERLAGLGVEWVQIDEPALVLDLPQAWRDAYQAVYAKLAASPVKLLLATYFDGLKDNLATALALPVAGLHVDLVRAPDQLSDVASGLRPGQVLSAGVINGRNIWRTDLDAALAMLVPVREQLQERLWLAPSCSLLHVPVDLAGETELDAELLGWLSFAVQKLDELCLLGKALGGDADPAVQQGLAAQRAALQARRQSPRIHNPAVAQRMAGQAGVSRERAPFGQRIARQQSELRLPAFPTTTIGSFPQTAEIRALRRDWKSGALTDSAYENAIRKEIEEVIRFQEKVGLDVLVHGEPERNDMVEYFGELLAGFAFTKNGWVQSYGSRCVKPPIIFGDVARPAPMTVGWSAYAQSLTDKPVKGMLTGPVTILQWSFVRDDQPREATCRQLALALRDEVVDLEAAGIRVIQIDEPAIREGLPLRRADWRAYLDWAVDCFRLSTAGVGEATQIHTHMCYSEFNDIIESIAAMDADVITIETSRSNMELLKAFEDFHYPNDIGPGVYDIHSPNVPEVDWMVELMRKAAARLPKERLWVNPDCGLKTRAWPETEAALIGMVQAARTLRAA.

Residues 16–19 (RELK) and Lys-117 each bind 5-methyltetrahydropteroyltri-L-glutamate. Residues 442–444 (IGS) and Glu-495 contribute to the L-homocysteine site. L-methionine contacts are provided by residues 442-444 (IGS) and Glu-495. Residues 526 to 527 (RC) and Trp-572 contribute to the 5-methyltetrahydropteroyltri-L-glutamate site. Position 610 (Asp-610) interacts with L-homocysteine. L-methionine is bound at residue Asp-610. Residue Glu-616 participates in 5-methyltetrahydropteroyltri-L-glutamate binding. Residues His-652, Cys-654, and Glu-676 each contribute to the Zn(2+) site. The Proton donor role is filled by His-705. Cys-737 contacts Zn(2+).

Belongs to the vitamin-B12 independent methionine synthase family. Zn(2+) serves as cofactor.

The catalysed reaction is 5-methyltetrahydropteroyltri-L-glutamate + L-homocysteine = tetrahydropteroyltri-L-glutamate + L-methionine. The protein operates within amino-acid biosynthesis; L-methionine biosynthesis via de novo pathway; L-methionine from L-homocysteine (MetE route): step 1/1. Its function is as follows. Catalyzes the transfer of a methyl group from 5-methyltetrahydrofolate to homocysteine resulting in methionine formation. In Bordetella pertussis (strain Tohama I / ATCC BAA-589 / NCTC 13251), this protein is 5-methyltetrahydropteroyltriglutamate--homocysteine methyltransferase.